Here is a 348-residue protein sequence, read N- to C-terminus: NADH-quinone oxidoreductase subunit H (348 aa).

A run of 8 helical transmembrane segments spans residues 25-45 (ILFL…VAAL), 95-115 (FMFI…FAII), 128-148 (IGIL…MFGG), 168-188 (ISYE…TGSF), 204-224 (WNIF…VAVT), 254-274 (FFIG…CLFF), 287-307 (ILPP…MFVL), and 327-347 (VCLP…LISA).

This sequence belongs to the complex I subunit 1 family. NDH-1 is composed of 14 different subunits. Subunits NuoA, H, J, K, L, M, N constitute the membrane sector of the complex.

It is found in the cell inner membrane. The enzyme catalyses a quinone + NADH + 5 H(+)(in) = a quinol + NAD(+) + 4 H(+)(out). In terms of biological role, NDH-1 shuttles electrons from NADH, via FMN and iron-sulfur (Fe-S) centers, to quinones in the respiratory chain. The immediate electron acceptor for the enzyme in this species is believed to be ubiquinone. Couples the redox reaction to proton translocation (for every two electrons transferred, four hydrogen ions are translocated across the cytoplasmic membrane), and thus conserves the redox energy in a proton gradient. This subunit may bind ubiquinone. The protein is NADH-quinone oxidoreductase subunit H of Psychrobacter sp. (strain PRwf-1).